The primary structure comprises 688 residues: Alpha-1,4-glucan:maltose-1-phosphate maltosyltransferase (688 aa).

Alpha-maltose 1-phosphate is bound by residues K289, Q349, and D384. The active-site Nucleophile is the D420. Residue N421 coordinates alpha-maltose 1-phosphate. E449 serves as the catalytic Proton donor. 560–561 lines the alpha-maltose 1-phosphate pocket; it reads KY.

The protein belongs to the glycosyl hydrolase 13 family. GlgE subfamily. In terms of assembly, homodimer.

The enzyme catalyses alpha-maltose 1-phosphate + [(1-&gt;4)-alpha-D-glucosyl](n) = [(1-&gt;4)-alpha-D-glucosyl](n+2) + phosphate. In terms of biological role, maltosyltransferase that uses maltose 1-phosphate (M1P) as the sugar donor to elongate linear or branched alpha-(1-&gt;4)-glucans. Is involved in a branched alpha-glucan biosynthetic pathway from trehalose, together with TreS, Mak and GlgB. This is Alpha-1,4-glucan:maltose-1-phosphate maltosyltransferase from Rhodospirillum rubrum (strain ATCC 11170 / ATH 1.1.1 / DSM 467 / LMG 4362 / NCIMB 8255 / S1).